The chain runs to 284 residues: L-ribulose-5-phosphate 3-epimerase UlaE (284 aa).

Belongs to the L-ribulose-5-phosphate 3-epimerase family.

The catalysed reaction is L-ribulose 5-phosphate = L-xylulose 5-phosphate. It functions in the pathway cofactor degradation; L-ascorbate degradation; D-xylulose 5-phosphate from L-ascorbate: step 3/4. In terms of biological role, catalyzes the isomerization of L-xylulose-5-phosphate to L-ribulose-5-phosphate. Is involved in the anaerobic L-ascorbate utilization. The polypeptide is L-ribulose-5-phosphate 3-epimerase UlaE (Escherichia coli O127:H6 (strain E2348/69 / EPEC)).